Consider the following 315-residue polypeptide: Adenine deaminase (315 aa).

Residues H14, H16, and H194 each contribute to the Zn(2+) site. E197 serves as the catalytic Proton donor. Zn(2+) is bound at residue D275. D276 is a substrate binding site.

Belongs to the metallo-dependent hydrolases superfamily. Adenosine and AMP deaminases family. Adenine deaminase type 2 subfamily. Requires Zn(2+) as cofactor.

It catalyses the reaction adenine + H2O + H(+) = hypoxanthine + NH4(+). Catalyzes the hydrolytic deamination of adenine to hypoxanthine. Plays an important role in the purine salvage pathway and in nitrogen catabolism. This chain is Adenine deaminase, found in Pseudomonas putida (strain GB-1).